A 261-amino-acid polypeptide reads, in one-letter code: Thiazole synthase (261 aa).

Catalysis depends on lysine 102, which acts as the Schiff-base intermediate with DXP. Residues glycine 163, 189-190 (AG), and 211-212 (NT) each bind 1-deoxy-D-xylulose 5-phosphate.

This sequence belongs to the ThiG family. As to quaternary structure, homotetramer. Forms heterodimers with either ThiH or ThiS.

The protein localises to the cytoplasm. It carries out the reaction [ThiS sulfur-carrier protein]-C-terminal-Gly-aminoethanethioate + 2-iminoacetate + 1-deoxy-D-xylulose 5-phosphate = [ThiS sulfur-carrier protein]-C-terminal Gly-Gly + 2-[(2R,5Z)-2-carboxy-4-methylthiazol-5(2H)-ylidene]ethyl phosphate + 2 H2O + H(+). Its pathway is cofactor biosynthesis; thiamine diphosphate biosynthesis. Its function is as follows. Catalyzes the rearrangement of 1-deoxy-D-xylulose 5-phosphate (DXP) to produce the thiazole phosphate moiety of thiamine. Sulfur is provided by the thiocarboxylate moiety of the carrier protein ThiS. In vitro, sulfur can be provided by H(2)S. The polypeptide is Thiazole synthase (Acinetobacter baylyi (strain ATCC 33305 / BD413 / ADP1)).